Here is a 175-residue protein sequence, read N- to C-terminus: Large ribosomal subunit protein uL6 (175 aa).

The protein belongs to the universal ribosomal protein uL6 family. As to quaternary structure, part of the 50S ribosomal subunit.

Functionally, this protein binds to the 23S rRNA, and is important in its secondary structure. It is located near the subunit interface in the base of the L7/L12 stalk, and near the tRNA binding site of the peptidyltransferase center. The protein is Large ribosomal subunit protein uL6 of Xanthomonas axonopodis pv. citri (strain 306).